The chain runs to 23 residues: Superoxide dismutase [Mn], mitochondrial (23 aa).

The protein belongs to the iron/manganese superoxide dismutase family. Homotetramer. The cofactor is Mn(2+).

The protein resides in the mitochondrion matrix. The enzyme catalyses 2 superoxide + 2 H(+) = H2O2 + O2. Functionally, destroys superoxide anion radicals which are normally produced within the cells and which are toxic to biological systems. The polypeptide is Superoxide dismutase [Mn], mitochondrial (Aquarana catesbeiana (American bullfrog)).